Reading from the N-terminus, the 27-residue chain is Trichocyst matrix protein T4-C (27 aa).

This sequence belongs to the TMP family.

The protein localises to the trichocyst. Its function is as follows. Structural protein that crystallize inside the trichocyst matrix. The chain is Trichocyst matrix protein T4-C (T4C) from Paramecium tetraurelia.